Here is a 232-residue protein sequence, read N- to C-terminus: Large ribosomal subunit protein uL1 (232 aa).

Belongs to the universal ribosomal protein uL1 family. As to quaternary structure, part of the 50S ribosomal subunit.

Its function is as follows. Binds directly to 23S rRNA. The L1 stalk is quite mobile in the ribosome, and is involved in E site tRNA release. In terms of biological role, protein L1 is also a translational repressor protein, it controls the translation of the L11 operon by binding to its mRNA. This chain is Large ribosomal subunit protein uL1, found in Porphyromonas gingivalis (strain ATCC 33277 / DSM 20709 / CIP 103683 / JCM 12257 / NCTC 11834 / 2561).